Reading from the N-terminus, the 121-residue chain is Basic phospholipase A2 homolog piratoxin-2 (121 aa).

Disulfide bonds link Cys-26–Cys-115, Cys-28–Cys-44, Cys-43–Cys-95, Cys-49–Cys-121, Cys-50–Cys-88, Cys-57–Cys-81, and Cys-75–Cys-86. The tract at residues 105–117 (KKYRYHLKPFCKK) is important for membrane-damaging activities in eukaryotes and bacteria; heparin-binding.

This sequence belongs to the phospholipase A2 family. Group II subfamily. K49 sub-subfamily. Homodimer; non-covalently linked. As to expression, expressed by the venom gland.

The protein localises to the secreted. In terms of biological role, snake venom phospholipase A2 (PLA2) homolog that lacks enzymatic activity. Shows myotoxic activity and edema-inducing activities in vivo. A model of myotoxic mechanism has been proposed: an apo Lys49-PLA2 is activated by the entrance of a hydrophobic molecule (e.g. fatty acid) at the hydrophobic channel of the protein leading to a reorientation of a monomer. This reorientation causes a transition between 'inactive' to 'active' states, causing alignment of C-terminal and membrane-docking sites (MDoS) side-by-side and putting the membrane-disruption sites (MDiS) in the same plane, exposed to solvent and in a symmetric position for both monomers. The MDoS region stabilizes the toxin on membrane by the interaction of charged residues with phospholipid head groups. Subsequently, the MDiS region destabilizes the membrane with penetration of hydrophobic residues. This insertion causes a disorganization of the membrane, allowing an uncontrolled influx of ions (i.e. calcium and sodium), and eventually triggering irreversible intracellular alterations and cell death. The sequence is that of Basic phospholipase A2 homolog piratoxin-2 from Bothrops pirajai (Piraja's lancehead).